Here is a 544-residue protein sequence, read N- to C-terminus: Glutamyl-tRNA(Gln) amidotransferase subunit B, chloroplastic/mitochondrial (544 aa).

This sequence belongs to the GatB/GatE family. GatB subfamily. As to quaternary structure, subunit of the heterotrimeric GatCAB amidotransferase (AdT) complex, composed of A, B and C subunits.

The protein resides in the mitochondrion. The protein localises to the plastid. Its subcellular location is the chloroplast. The enzyme catalyses L-glutamyl-tRNA(Gln) + L-glutamine + ATP + H2O = L-glutaminyl-tRNA(Gln) + L-glutamate + ADP + phosphate + H(+). Its function is as follows. Allows the formation of correctly charged Gln-tRNA(Gln) through the transamidation of misacylated Glu-tRNA(Gln) in chloroplasts and mitochondria. The reaction takes place in the presence of glutamine and ATP through an activated gamma-phospho-Glu-tRNA(Gln). The sequence is that of Glutamyl-tRNA(Gln) amidotransferase subunit B, chloroplastic/mitochondrial from Oryza sativa subsp. japonica (Rice).